The primary structure comprises 488 residues: Ammonium transporter Rh type C-like 2 (488 aa).

Residues 1–21 are Cytoplasmic-facing; it reads MGNCFGSRGICDRPKNTNIRL. A helical membrane pass occupies residues 22 to 42; sequence SLPAVCFVWQVSMIILFGVFV. Residues 43–73 are Extracellular-facing; the sequence is RYNEEADTNWVYTKKEKNITSDIENDFYFRY. Asparagine 60 carries N-linked (GlcNAc...) asparagine glycosylation. Residues 74–94 traverse the membrane as a helical segment; that stretch reads PSFQDVHVMIFVGFGFLMTFL. The Cytoplasmic portion of the chain corresponds to 95–98; the sequence is KRYS. The helical transmembrane segment at 99–119 threads the bilayer; the sequence is FGAVGFNFLIAAFGLQWALLM. Topologically, residues 120-139 are extracellular; it reads QGWFSPLGDDGKIKIGIENL. A helical transmembrane segment spans residues 140 to 160; sequence INADFCVASCLIAYGAVLGKV. Topologically, residues 161-162 are cytoplasmic; it reads SP. A helical transmembrane segment spans residues 163–183; that stretch reads VQLLVMTLFGITLYAVEEFII. The Extracellular portion of the chain corresponds to 184 to 191; the sequence is LRVLNAKD. Residues 192–214 traverse the membrane as a helical segment; that stretch reads AGGSMVIHTFGAYYGLSISRVLY. Residues 215–232 are Cytoplasmic-facing; it reads RPNLNKSKHMNGSVYHSD. Residues 233–253 form a helical membrane-spanning segment; the sequence is VFAMIGTLFLWMFWPSFNSAI. The Extracellular segment spans residues 254 to 264; the sequence is CNHGDGQHRAA. Residues 265–285 traverse the membrane as a helical segment; the sequence is INTYLALASTVLTTVAISSMF. Residues 286–298 lie on the Cytoplasmic side of the membrane; that stretch reads EKTGKLDMVHIQN. A helical membrane pass occupies residues 299 to 319; that stretch reads STLAGGVAVGTAAEFMLMPYG. Serine 320 is a topological domain (extracellular). Residues 321-341 form a helical membrane-spanning segment; the sequence is LIVGFFCGIISTLGYIYLTPF. At 342–356 the chain is on the cytoplasmic side; it reads LEERLKIQDTCGIHN. A helical transmembrane segment spans residues 357–377; it reads LHAMPGVIGGIVGAISAAAAS. The Extracellular segment spans residues 378–409; that stretch reads KEVYGDLGLKNIFSIEGSNVTRLPTVQGGYQA. A helical transmembrane segment spans residues 410–430; sequence AALCVALCFGIGGGTFVGLVL. At 431 to 488 the chain is on the cytoplasmic side; sequence KLPIWGDPADEHCFNDEMYWEVPEDEESIIPPVLSYNNHMIPNNKHEEMRETNFAEQS.

This sequence belongs to the ammonium transporter (TC 2.A.49) family. Rh subfamily. As to quaternary structure, homotrimer. In terms of tissue distribution, at larval stages, expressed only in the yolk sac and gill. However, the kidney and the gills are major sites of expression in adults.

It localises to the apical cell membrane. Its function is as follows. Functions as an ammonia transporter. May play a role in the elimination of ammonia in the gill. The polypeptide is Ammonium transporter Rh type C-like 2 (rhcgl2) (Danio rerio (Zebrafish)).